We begin with the raw amino-acid sequence, 346 residues long: [LysW]-lysine/[LysW]-ornithine hydrolase (346 aa).

H68 contacts Zn(2+). The active site involves D70. D92 lines the Zn(2+) pocket. The active-site Proton acceptor is E122. Residues E123, E146, and H317 each contribute to the Zn(2+) site.

It belongs to the peptidase M20A family. LysK subfamily. It depends on Zn(2+) as a cofactor. Co(2+) serves as cofactor.

It is found in the cytoplasm. It carries out the reaction [amino-group carrier protein]-C-terminal-gamma-(L-lysyl)-L-glutamate + H2O = [amino-group carrier protein]-C-terminal-L-glutamate + L-lysine. The catalysed reaction is [amino-group carrier protein]-C-terminal-gamma-(L-ornithyl)-L-glutamate + H2O = [amino-group carrier protein]-C-terminal-L-glutamate + L-ornithine. It functions in the pathway amino-acid biosynthesis; L-lysine biosynthesis via AAA pathway; L-lysine from L-alpha-aminoadipate (Thermus route): step 5/5. The protein operates within amino-acid biosynthesis; L-arginine biosynthesis. Functionally, catalyzes the release of L-lysine from [LysW]-gamma-L-lysine and the release of L-ornithine from [LysW]-L-ornithine. The sequence is that of [LysW]-lysine/[LysW]-ornithine hydrolase from Saccharolobus islandicus (strain M.16.27) (Sulfolobus islandicus).